Consider the following 567-residue polypeptide: MASITRQAYAEMFGPTVGDRLRLADTALVIEIEKDHTIYGEEVKFGGGKVIRDGMGQSQRMAADCADTVITNAVIIDHWGIVKADIAIKNGLIAGIGKAGNPDMQPGVTIVIGPGTEIIAGEGMIVTAGGIDTHIHFICPQQIDEALTSGVTTMIGGGTGPATGTFATTVTPGPWHMERMLQAVDGYPMNIGLLGKGNASQAAPLREQIAAGAIGLKLHEDWGSTPAAIDCCLGVADETDTQVAIHTDTLNEGGFVEATVAAFKGRTIHTYHTEGAGGGHAPDIIKVCGEANVLPSSTNPTRPYTVNTLDEHLDMLMVCHHLDASIAEDIAFAESRIRRETIAAEDVLHDLGAFSMISSDSQAMGRVGEVVLRTWQTAHKMKVQRGSLPGDNARHDNFRVKRYVAKYTINPARTHGIAHVVGSVEVGKLADLVLWRPAFFGVKPSLILKGGSIASAAMGDPNASIPTPQPVHYRPMFAGQGSGVAAASLTFVSQAAQQAGVADRYGLRKRTVAVENCRSVSKRDMVHNDWQPDISVDPETYQVVADGQLLTCEPATELPMAQRYFLF.

In terms of domain architecture, Urease spans Gly129–Phe567. Positions 134, 136, and 217 each coordinate Ni(2+). Lys217 is modified (N6-carboxylysine). Substrate is bound at residue His219. 2 residues coordinate Ni(2+): His246 and His272. The active-site Proton donor is the His320. Asp360 contacts Ni(2+).

It belongs to the metallo-dependent hydrolases superfamily. Urease alpha subunit family. As to quaternary structure, heterotrimer of UreA (gamma), UreB (beta) and UreC (alpha) subunits. Three heterotrimers associate to form the active enzyme. Requires Ni cation as cofactor. Carboxylation allows a single lysine to coordinate two nickel ions.

The protein resides in the cytoplasm. It carries out the reaction urea + 2 H2O + H(+) = hydrogencarbonate + 2 NH4(+). It participates in nitrogen metabolism; urea degradation; CO(2) and NH(3) from urea (urease route): step 1/1. This chain is Urease subunit alpha, found in Delftia acidovorans (strain DSM 14801 / SPH-1).